Reading from the N-terminus, the 224-residue chain is Cardosin-E (224 aa).

The Peptidase A1 domain occupies 1 to 221; it reads DSGSAIVALT…DYGNLLVGFA (221 aa). The active site involves D35. C125 and C129 are joined by a disulfide. D134 is an active-site residue.

The protein belongs to the peptidase A1 family. As to quaternary structure, heterodimer of a light chain and a heavy chain. An intermediate form is produced first, and undergoes proteolytic processing to remove the internal plant-specific insert (PSI) and the propeptide. Post-translationally, N-glycosylated. Pistils.

The protein localises to the microsome membrane. It localises to the protein storage vacuole. The protein resides in the secreted. Its subcellular location is the cell wall. It is found in the extracellular space. The protein localises to the extracellular matrix. With respect to regulation, inhibited by pepstatin. Its function is as follows. Aspartic protease with a high preference for bonds between hydrophobic residues. The protein is Cardosin-E of Cynara cardunculus (Cardoon).